Here is a 315-residue protein sequence, read N- to C-terminus: Methionyl-tRNA formyltransferase (315 aa).

113 to 116 lines the (6S)-5,6,7,8-tetrahydrofolate pocket; it reads SLLP.

Belongs to the Fmt family.

The enzyme catalyses L-methionyl-tRNA(fMet) + (6R)-10-formyltetrahydrofolate = N-formyl-L-methionyl-tRNA(fMet) + (6S)-5,6,7,8-tetrahydrofolate + H(+). Its function is as follows. Attaches a formyl group to the free amino group of methionyl-tRNA(fMet). The formyl group appears to play a dual role in the initiator identity of N-formylmethionyl-tRNA by promoting its recognition by IF2 and preventing the misappropriation of this tRNA by the elongation apparatus. The sequence is that of Methionyl-tRNA formyltransferase from Escherichia fergusonii (strain ATCC 35469 / DSM 13698 / CCUG 18766 / IAM 14443 / JCM 21226 / LMG 7866 / NBRC 102419 / NCTC 12128 / CDC 0568-73).